The chain runs to 118 residues: Holo-[acyl-carrier-protein] synthase (118 aa).

Residues D8 and E58 each contribute to the Mg(2+) site.

The protein belongs to the P-Pant transferase superfamily. AcpS family. Requires Mg(2+) as cofactor.

It is found in the cytoplasm. It catalyses the reaction apo-[ACP] + CoA = holo-[ACP] + adenosine 3',5'-bisphosphate + H(+). In terms of biological role, transfers the 4'-phosphopantetheine moiety from coenzyme A to a Ser of acyl-carrier-protein. The protein is Holo-[acyl-carrier-protein] synthase of Lactobacillus helveticus (strain DPC 4571).